A 424-amino-acid polypeptide reads, in one-letter code: ATP-sensitive inward rectifier potassium channel 8 (424 aa).

Residues 1–69 (MLARKSIIPE…IFTTLVDLKW (69 aa)) are Cytoplasmic-facing. Position 6 is a phosphoserine (Ser6). Residues 70–94 (RHTLVIFTMSFLCSWLLFAIMWWLV) form a helical membrane-spanning segment. At 95–126 (AFAHGDIYAYMEKSGMEKSGLESTVCVTNVRS) the chain is on the extracellular side. The segment at residues 127–138 (FTSAFLFSIEVQ) is an intramembrane region (helical; Pore-forming). An intramembrane region (pore-forming) is located at residues 139-145 (VTIGFGG). The Selectivity filter motif lies at 140–145 (TIGFGG). At 146–154 (RMMTEECPL) the chain is on the extracellular side. A helical membrane pass occupies residues 155-176 (AITVLILQNIVGLIINAVMLGC). Topologically, residues 177–424 (IFMKTAQAHR…PEGNQNTSES (248 aa)) are cytoplasmic. A disordered region spans residues 375–424 (SHQNSLRKRNSMRRNNSMRRNNSIRRNNSSLMVPKVQFMTPEGNQNTSES). The segment covering 387 to 404 (RRNNSMRRNNSIRRNNSS) has biased composition (low complexity).

The protein belongs to the inward rectifier-type potassium channel (TC 1.A.2.1) family. KCNJ8 subfamily. Interacts with ABCC9. Predominantly detected in fetal and adult heart.

The protein resides in the membrane. The enzyme catalyses K(+)(in) = K(+)(out). Inward rectifier potassium channels are characterized by a greater tendency to allow potassium to flow into the cell rather than out of it. Their voltage dependence is regulated by the concentration of extracellular potassium; as external potassium is raised, the voltage range of the channel opening shifts to more positive voltages. The inward rectification is mainly due to the blockage of outward current by internal magnesium. This channel is activated by internal ATP and can be blocked by external barium. Can form a sulfonylurea-sensitive but ATP-insensitive potassium channel with ABCC9. The chain is ATP-sensitive inward rectifier potassium channel 8 (KCNJ8) from Homo sapiens (Human).